A 180-amino-acid polypeptide reads, in one-letter code: Peptide deformylase (180 aa).

2 residues coordinate Fe cation: cysteine 88 and histidine 130. Glutamate 131 is a catalytic residue. Histidine 134 serves as a coordination point for Fe cation.

It belongs to the polypeptide deformylase family. Requires Fe(2+) as cofactor.

It carries out the reaction N-terminal N-formyl-L-methionyl-[peptide] + H2O = N-terminal L-methionyl-[peptide] + formate. In terms of biological role, removes the formyl group from the N-terminal Met of newly synthesized proteins. Requires at least a dipeptide for an efficient rate of reaction. N-terminal L-methionine is a prerequisite for activity but the enzyme has broad specificity at other positions. This chain is Peptide deformylase, found in Acidothermus cellulolyticus (strain ATCC 43068 / DSM 8971 / 11B).